The following is a 157-amino-acid chain: Transcriptional regulator MraZ (157 aa).

2 consecutive SpoVT-AbrB domains span residues 7–54 and 83–126; these read TYTM…GTSL and TEML…EPER.

The protein belongs to the MraZ family. Forms oligomers.

The protein resides in the cytoplasm. It localises to the nucleoid. This Azorhizobium caulinodans (strain ATCC 43989 / DSM 5975 / JCM 20966 / LMG 6465 / NBRC 14845 / NCIMB 13405 / ORS 571) protein is Transcriptional regulator MraZ.